Here is a 544-residue protein sequence, read N- to C-terminus: MPFDRDKLEELRSLAQRDFDRAWKEGAKLVREPGLRDRYPRLKVETGEPHPLFETIQQLREAYLRAGFREVVNPVIIPEEEVYKQFGPEAAAVLDRCFYLAGLPRPDVGLGADKVEKLAEVLGREPSEDEVERLRETLHAYKKGEIDGDELTHEIAEALDTDDGTAVRILDEVFPELKRLKPEPLEPPLTLRSHMTAGWFITLSEILKREDPPLKLFSIDRCFRREQREDESHLMTYHSASCVVVSDDVTVDTGKAVAEAILRQFGFEDFEFVPDEKMSKYYVPGTQTEVYAYHPDLEDSIEDEELGPGWVEIATFGLYSPVALAEYGIDYPVMNLGIGVERLCMVLHGIDDVRSLAYVEYEPWEPSDLELARMIDYERKPATSFGERLVREVVRGLHEHADEEGPVEVELFRGEFGDREVVVHAVEEEKGEPLAGPAAFNRVYVLDGNLYAVPPEGDFGREIREEGVYSGVSFEEGLAARLAYEVEELLATGGGETTVSVRKVSRPSQVNLSLPRKLLRYVTKKGGEIEIKGPVFVTLRAEVR.

Substrate-binding positions include 194–196 (HMT), 239–241 (SAS), 281–282 (YY), and Asn335.

It belongs to the class-II aminoacyl-tRNA synthetase family. O-phosphoseryl-tRNA(Cys) synthetase subfamily. As to quaternary structure, homotetramer. Interacts with SepCysS.

The enzyme catalyses tRNA(Cys) + O-phospho-L-serine + ATP = O-phospho-L-seryl-tRNA(Cys) + AMP + diphosphate. Functionally, catalyzes the attachment of O-phosphoserine (Sep) to tRNA(Cys). In Methanopyrus kandleri (strain AV19 / DSM 6324 / JCM 9639 / NBRC 100938), this protein is O-phosphoserine--tRNA(Cys) ligase.